The sequence spans 82 residues: Exodeoxyribonuclease 7 small subunit (82 aa).

It belongs to the XseB family. In terms of assembly, heterooligomer composed of large and small subunits.

Its subcellular location is the cytoplasm. The enzyme catalyses Exonucleolytic cleavage in either 5'- to 3'- or 3'- to 5'-direction to yield nucleoside 5'-phosphates.. Functionally, bidirectionally degrades single-stranded DNA into large acid-insoluble oligonucleotides, which are then degraded further into small acid-soluble oligonucleotides. The chain is Exodeoxyribonuclease 7 small subunit from Sodalis glossinidius (strain morsitans).